The chain runs to 128 residues: L-ectoine synthase (128 aa).

The protein belongs to the ectoine synthase family.

The enzyme catalyses (2S)-4-acetamido-2-aminobutanoate = L-ectoine + H2O. It participates in amine and polyamine biosynthesis; ectoine biosynthesis; L-ectoine from L-aspartate 4-semialdehyde: step 3/3. Its function is as follows. Catalyzes the circularization of gamma-N-acetyl-alpha,gamma-diaminobutyric acid (ADABA) to ectoine (1,4,5,6-tetrahydro-2-methyl-4-pyrimidine carboxylic acid), which is an excellent osmoprotectant. The sequence is that of L-ectoine synthase from Virgibacillus pantothenticus.